We begin with the raw amino-acid sequence, 188 residues long: Large ribosomal subunit protein bL35m (188 aa).

The protein belongs to the bacterial ribosomal protein bL35 family.

The protein resides in the mitochondrion. The sequence is that of Large ribosomal subunit protein bL35m (MRPL35) from Pongo abelii (Sumatran orangutan).